The following is a 570-amino-acid chain: Periplasmic trehalase (570 aa).

A signal peptide spans 1–34 (MIPPEIRRSVLLQKAIKLALAGTLLTFASFSATA). Substrate is bound by residues Arg159, 166–167 (WD), Asn203, 212–214 (RSQ), 284–286 (RPE), and Gly317. Catalysis depends on proton donor/acceptor residues Asp319 and Glu503. Glu518 contacts substrate. A disordered region spans residues 544–570 (KPCDSVPSTRPASLSATPTKTPSAATQ). The segment covering 554-570 (PASLSATPTKTPSAATQ) has biased composition (low complexity).

Belongs to the glycosyl hydrolase 37 family. In terms of assembly, monomer.

It localises to the periplasm. It carries out the reaction alpha,alpha-trehalose + H2O = alpha-D-glucose + beta-D-glucose. Functionally, provides the cells with the ability to utilize trehalose at high osmolarity by splitting it into glucose molecules that can subsequently be taken up by the phosphotransferase-mediated uptake system. This chain is Periplasmic trehalase, found in Salmonella newport (strain SL254).